A 398-amino-acid polypeptide reads, in one-letter code: 1-deoxy-D-xylulose 5-phosphate reductoisomerase (398 aa).

NADPH is bound by residues threonine 10, glycine 11, serine 12, isoleucine 13, lysine 37, asparagine 38, and asparagine 124. A 1-deoxy-D-xylulose 5-phosphate-binding site is contributed by lysine 125. Glutamate 126 provides a ligand contact to NADPH. Mn(2+) is bound at residue aspartate 150. 1-deoxy-D-xylulose 5-phosphate is bound by residues serine 151, glutamate 152, serine 186, and histidine 209. Glutamate 152 contacts Mn(2+). Glycine 215 lines the NADPH pocket. Serine 222, asparagine 227, lysine 228, and glutamate 231 together coordinate 1-deoxy-D-xylulose 5-phosphate. Glutamate 231 lines the Mn(2+) pocket.

It belongs to the DXR family. In terms of assembly, homodimer. It depends on Mg(2+) as a cofactor. Requires Mn(2+) as cofactor.

The enzyme catalyses 2-C-methyl-D-erythritol 4-phosphate + NADP(+) = 1-deoxy-D-xylulose 5-phosphate + NADPH + H(+). It functions in the pathway isoprenoid biosynthesis; isopentenyl diphosphate biosynthesis via DXP pathway; isopentenyl diphosphate from 1-deoxy-D-xylulose 5-phosphate: step 1/6. Its function is as follows. Catalyzes the NADPH-dependent rearrangement and reduction of 1-deoxy-D-xylulose-5-phosphate (DXP) to 2-C-methyl-D-erythritol 4-phosphate (MEP). This Buchnera aphidicola subsp. Acyrthosiphon pisum (strain 5A) protein is 1-deoxy-D-xylulose 5-phosphate reductoisomerase.